Here is an 84-residue protein sequence, read N- to C-terminus: MKPDIHPNYRVVVFHDTSANAYFTIGSTIRTERTITLNGEEYPYVTVDVSSESHPFYTGKQKTLSQEGSTARFQKKFGRFIGNK.

It belongs to the bacterial ribosomal protein bL31 family. Type B subfamily. Part of the 50S ribosomal subunit.

In Photorhabdus laumondii subsp. laumondii (strain DSM 15139 / CIP 105565 / TT01) (Photorhabdus luminescens subsp. laumondii), this protein is Large ribosomal subunit protein bL31B.